Consider the following 534-residue polypeptide: Bifunctional pantoate ligase/cytidylate kinase (534 aa).

A pantoate--beta-alanine ligase region spans residues 1 to 302; it reads MRLLTTVAAL…LGSTRLIDNT (302 aa). ATP is bound at residue 48 to 55; the sequence is MGSLHQGH. Histidine 55 serves as the catalytic Proton donor. Glutamine 79 lines the (R)-pantoate pocket. A beta-alanine-binding site is contributed by glutamine 79. 172 to 175 contacts ATP; sequence GQKD. Glutamine 178 provides a ligand contact to (R)-pantoate. Residues valine 201 and 209-212 contribute to the ATP site; that span reads CSSR. Residues 303–534 form a cytidylate kinase region; that stretch reads ILRDRQPIIA…DYYQQRLSQW (232 aa).

This sequence in the N-terminal section; belongs to the pantothenate synthetase family. It in the C-terminal section; belongs to the cytidylate kinase family. Type 1 subfamily.

The protein resides in the cytoplasm. It catalyses the reaction (R)-pantoate + beta-alanine + ATP = (R)-pantothenate + AMP + diphosphate + H(+). It carries out the reaction CMP + ATP = CDP + ADP. The catalysed reaction is dCMP + ATP = dCDP + ADP. The protein operates within cofactor biosynthesis; (R)-pantothenate biosynthesis; (R)-pantothenate from (R)-pantoate and beta-alanine: step 1/1. In terms of biological role, catalyzes the condensation of pantoate with beta-alanine in an ATP-dependent reaction via a pantoyl-adenylate intermediate. Functionally, catalyzes the transfer of a phosphate group from ATP to either CMP or dCMP to form CDP or dCDP and ADP, respectively. The protein is Bifunctional pantoate ligase/cytidylate kinase of Trichormus variabilis (strain ATCC 29413 / PCC 7937) (Anabaena variabilis).